Consider the following 310-residue polypeptide: Protein-L-isoaspartate O-methyltransferase (310 aa).

The tract at residues 1 to 41 (MSGERAKRFPLALEDLKRAPRKSEGRPGERQTAGAVPKAAD) is disordered. Residues 14-29 (EDLKRAPRKSEGRPGE) show a composition bias toward basic and acidic residues. Residue serine 157 is part of the active site.

It belongs to the methyltransferase superfamily. L-isoaspartyl/D-aspartyl protein methyltransferase family.

The protein localises to the cytoplasm. The catalysed reaction is [protein]-L-isoaspartate + S-adenosyl-L-methionine = [protein]-L-isoaspartate alpha-methyl ester + S-adenosyl-L-homocysteine. In terms of biological role, catalyzes the methyl esterification of L-isoaspartyl residues in peptides and proteins that result from spontaneous decomposition of normal L-aspartyl and L-asparaginyl residues. It plays a role in the repair and/or degradation of damaged proteins. This Burkholderia cenocepacia (strain HI2424) protein is Protein-L-isoaspartate O-methyltransferase.